The chain runs to 971 residues: Reversion-inducing cysteine-rich protein with Kazal motifs (971 aa).

Residues 1–22 (MATVRASLRGALLLLLAVAGVA) form the signal peptide. The Knot 1 repeat unit spans residues 37–84 (CCNHSKDNQMCRDVCEQIFSSKSESRLKHLLQRAPDYCPETMVEIWNC). A 5 X Knot repeats region spans residues 37 to 338 (CCNHSKDNQM…NPVEVSMLTC (302 aa)). Residues N39 and N86 are each glycosylated (N-linked (GlcNAc...) asparagine). Knot repeat units lie at residues 104-141 (CCELAIALECRQACKQASSKNDISKVCRKEYENALFSC) and 151-197 (CCSY…LIHC). Residue N200 is glycosylated (N-linked (GlcNAc...) asparagine). Knot repeat units lie at residues 216 to 263 (CCDR…LWQC) and 292 to 338 (CCSK…MLTC). 2 N-linked (GlcNAc...) asparagine glycosylation sites follow: N297 and N352. Kazal-like domains are found at residues 627–673 (TFTG…SCMS), 698–752 (TFDK…PCQP), and 753–789 (FCRATEPVCGHNGETYSSVCAAYSDRVAVDYYGDCQA). Intrachain disulfides connect C633–C658, C635–C654, C643–C671, C716–C735, C724–C750, and C761–C787. The GPI-anchor amidated serine moiety is linked to residue S942. The propeptide at 943–971 (AGVRARPSCHSLLLPLSLGLALHLLWTYN) is removed in mature form.

Belongs to the RECK family. In terms of assembly, interacts (via knot repeats) with WNT7A (via disordered linker region); the interaction is direct. Interacts (via knot repeats) with WNT7B (via disordered linker region); the interaction is direct. Interacts with ADGRA2; the interaction is direct. Interacts with MMP9. In terms of processing, N-glycosylated. In terms of tissue distribution, expressed in various tissues and untransformed cells. It is undetectable in tumor-derived cell lines and oncogenically transformed cells.

It is found in the cell membrane. In terms of biological role, functions together with ADGRA2 to enable brain endothelial cells to selectively respond to Wnt7 signals (WNT7A or WNT7B). Plays a key role in Wnt7-specific responses: required for central nervous system (CNS) angiogenesis and blood-brain barrier regulation. Acts as a Wnt7-specific coactivator of canonical Wnt signaling by decoding Wnt ligands: acts by interacting specifically with the disordered linker region of Wnt7, thereby conferring ligand selectivity for Wnt7. ADGRA2 is then required to deliver RECK-bound Wnt7 to frizzled by assembling a higher-order RECK-ADGRA2-Fzd-LRP5-LRP6 complex. Also acts as a serine protease inhibitor: negatively regulates matrix metalloproteinase-9 (MMP9) by suppressing MMP9 secretion and by direct inhibition of its enzymatic activity. Also inhibits metalloproteinase activity of MMP2 and MMP14 (MT1-MMP). This Homo sapiens (Human) protein is Reversion-inducing cysteine-rich protein with Kazal motifs.